A 364-amino-acid polypeptide reads, in one-letter code: Membrane-bound lytic murein transglycosylase C (364 aa).

The signal sequence occupies residues 1 to 19 (MNKYKKFLPLLVLIPFLAS). A lipid anchor (N-palmitoyl cysteine) is attached at cysteine 20. Cysteine 20 carries the S-diacylglycerol cysteine lipid modification.

Belongs to the transglycosylase Slt family.

It is found in the cell outer membrane. It catalyses the reaction Exolytic cleavage of the (1-&gt;4)-beta-glycosidic linkage between N-acetylmuramic acid (MurNAc) and N-acetylglucosamine (GlcNAc) residues in peptidoglycan, from either the reducing or the non-reducing ends of the peptidoglycan chains, with concomitant formation of a 1,6-anhydrobond in the MurNAc residue.. Its function is as follows. Murein-degrading enzyme. May play a role in recycling of muropeptides during cell elongation and/or cell division. The chain is Membrane-bound lytic murein transglycosylase C from Glaesserella parasuis serovar 5 (strain SH0165) (Haemophilus parasuis).